The chain runs to 90 residues: Small ribosomal subunit protein bS16 (90 aa).

It belongs to the bacterial ribosomal protein bS16 family.

The sequence is that of Small ribosomal subunit protein bS16 from Streptococcus pneumoniae (strain Hungary19A-6).